The following is a 432-amino-acid chain: Peptidyl-prolyl cis-trans isomerase cyp6 (432 aa).

Positions 1–168 (MSVLIETTVG…RDIRIKHTII (168 aa)) constitute a PPIase cyclophilin-type domain. Residue S206 is modified to Phosphoserine. One can recognise an RRM domain in the interval 244–322 (NVLFVCKLNP…SRIHVDFSQS (79 aa)). The segment at 330–432 (YNSNRDRKRS…DRRYRDDRYR (103 aa)) is disordered. Composition is skewed to basic and acidic residues over residues 341–366 (SRSDDREYHRRSDGRYDRSNYRDDYR), 373–395 (DHRDDQSSFRNERFSNYYGDDRS), and 406–432 (NCDDHLRDKSPERRYRYDRRYRDDRYR).

This sequence belongs to the cyclophilin-type PPIase family. PPIL4 subfamily.

It localises to the nucleus. It carries out the reaction [protein]-peptidylproline (omega=180) = [protein]-peptidylproline (omega=0). Functionally, PPIases accelerate the folding of proteins. It catalyzes the cis-trans isomerization of proline imidic peptide bonds in oligopeptides. This is Peptidyl-prolyl cis-trans isomerase cyp6 (cyp6) from Schizosaccharomyces pombe (strain 972 / ATCC 24843) (Fission yeast).